The chain runs to 360 residues: Cell division protein DivIB (360 aa).

The interval 1–54 is disordered; the sequence is MTEKDSNVEESVLEVEQASQVELDSEQISPAEKESVLAEEKEFSTDVDIPEMTA. The Cytoplasmic segment spans residues 1–139; it reads MTEKDSNVEE…VDIPSKVVWK (139 aa). Over residues 17–28 the composition is skewed to polar residues; sequence QASQVELDSEQI. A compositionally biased stretch (basic and acidic residues) spans 31–44; that stretch reads AEKESVLAEEKEFS. A helical transmembrane segment spans residues 140 to 160; sequence AIPVLVTSLLLAALALYFISP. Topologically, residues 161–360 are extracellular; sequence TSKKKQIEVV…MEVGIYRYAS (200 aa). In terms of domain architecture, POTRA spans 162–233; the sequence is SKKKQIEVVG…ATFTIHIKEY (72 aa).

It belongs to the FtsQ/DivIB family. DivIB subfamily.

The protein localises to the cell membrane. Its function is as follows. Cell division protein that may be involved in stabilizing or promoting the assembly of the division complex. The sequence is that of Cell division protein DivIB from Streptococcus suis (strain GZ1).